The chain runs to 90 residues: Large ribosomal subunit protein bL27 (90 aa).

The disordered stretch occupies residues 1–20 (MAHKKAGGSSRNGRDSAGKR).

The protein belongs to the bacterial ribosomal protein bL27 family.

This chain is Large ribosomal subunit protein bL27, found in Rhodopseudomonas palustris (strain ATCC BAA-98 / CGA009).